We begin with the raw amino-acid sequence, 1403 residues long: DNA-directed RNA polymerase subunit beta' (1403 aa).

The Zn(2+) site is built by Cys70, Cys72, Cys85, and Cys88. Mg(2+) contacts are provided by Asp461, Asp463, and Asp465. Zn(2+) contacts are provided by Cys816, Cys890, Cys897, and Cys900.

This sequence belongs to the RNA polymerase beta' chain family. In terms of assembly, the RNAP catalytic core consists of 2 alpha, 1 beta, 1 beta' and 1 omega subunit. When a sigma factor is associated with the core the holoenzyme is formed, which can initiate transcription. The cofactor is Mg(2+). It depends on Zn(2+) as a cofactor.

It carries out the reaction RNA(n) + a ribonucleoside 5'-triphosphate = RNA(n+1) + diphosphate. In terms of biological role, DNA-dependent RNA polymerase catalyzes the transcription of DNA into RNA using the four ribonucleoside triphosphates as substrates. This Dechloromonas aromatica (strain RCB) protein is DNA-directed RNA polymerase subunit beta'.